Here is a 93-residue protein sequence, read N- to C-terminus: Integration host factor subunit beta (93 aa).

Positions 59-93 (RVGRNPKTGQSVSLDGKFVPHFKPGKELRDRVNDD) are disordered. The segment covering 82–93 (PGKELRDRVNDD) has biased composition (basic and acidic residues).

This sequence belongs to the bacterial histone-like protein family. Heterodimer of an alpha and a beta chain.

This protein is one of the two subunits of integration host factor, a specific DNA-binding protein that functions in genetic recombination as well as in transcriptional and translational control. The polypeptide is Integration host factor subunit beta (Stutzerimonas stutzeri (strain A1501) (Pseudomonas stutzeri)).